We begin with the raw amino-acid sequence, 170 residues long: METDKYVFFHGANKNQAGVHIFSQWFPVNFKEYLNGEEFAEYVSAEQYMMAHKALLFGDMFHFKKIMECSKQCKIKYLGRRVRNFNPTIWDKHKFDIVTEGNRLKFSQNPDLMKRLLETGNKTIVEASPSDKIWGIGLTAQQAVNIPENKWPGKNLLGKVLMKIREENQQ.

This sequence belongs to the YbiA family.

It catalyses the reaction 2,5-diamino-6-hydroxy-4-(5-phosphoribosylamino)-pyrimidine + H2O = 2,5,6-triamino-4-hydroxypyrimidine + D-ribose 5-phosphate. The catalysed reaction is 5-amino-6-(5-phospho-D-ribosylamino)uracil + H2O = 5,6-diaminouracil + D-ribose 5-phosphate. Functionally, catalyzes the hydrolysis of the N-glycosidic bond in the first two intermediates of riboflavin biosynthesis, which are highly reactive metabolites, yielding relatively innocuous products. Thus, can divert a surplus of harmful intermediates into relatively harmless products and pre-empt the damage these intermediates would otherwise do. May act on other substrates in vivo. This chain is N-glycosidase R617, found in Acanthamoeba polyphaga mimivirus (APMV).